The sequence spans 232 residues: Large ribosomal subunit protein uL1 (232 aa).

It belongs to the universal ribosomal protein uL1 family. In terms of assembly, part of the 50S ribosomal subunit.

Its function is as follows. Binds directly to 23S rRNA. The L1 stalk is quite mobile in the ribosome, and is involved in E site tRNA release. Protein L1 is also a translational repressor protein, it controls the translation of the L11 operon by binding to its mRNA. This Bacteroides thetaiotaomicron (strain ATCC 29148 / DSM 2079 / JCM 5827 / CCUG 10774 / NCTC 10582 / VPI-5482 / E50) protein is Large ribosomal subunit protein uL1.